A 199-amino-acid polypeptide reads, in one-letter code: Pre-histone-like nucleoprotein (199 aa).

S2 is subject to N-acetylserine; by host. A propeptide spanning residues 2–23 is cleaved from the precursor; the sequence is SILISPSDNTGWGLGTGKMYGG. K26 carries the post-translational modification N6-acetyllysine; by host. Positions 189-199 match the Nuclear localization signal motif; the sequence is RRKASVRRRRT.

Belongs to the adenoviridae histone-like nucleoprotein family. Interacts with the core-capsid bridging protein; this interaction bridges the virus core to the capsid. Interacts with host NPM1; this interaction might play a role in placing the pre-histone-like nucleoprotein on the viral DNA or regulating viral gene expression. Interacts with host HMGB1; this interaction inhibits host immune response. Cleaved near the N-terminus by the viral protease during virion maturation to form the mature protein.

It localises to the virion. Its subcellular location is the host nucleus. The protein resides in the host nucleolus. In terms of biological role, plays a role in the inhibition of host immune response within the nucleus. Interacts with cellular nucleosomes and immobilizes the host immune danger signal HMGB1 on chromatin. In turn, prevents HMGB1 release out of the cell and thus decreases inflammation. Also plays a role in the wrapping and condensation of the viral DNA. May also promote viral genome import into the nucleus. This chain is Pre-histone-like nucleoprotein, found in Murine adenovirus A serotype 1 (MAdV-1).